A 203-amino-acid chain; its full sequence is Nucleoside triphosphate pyrophosphatase (203 aa).

Catalysis depends on Asp77, which acts as the Proton acceptor.

The protein belongs to the Maf family. A divalent metal cation is required as a cofactor.

Its subcellular location is the cytoplasm. The catalysed reaction is a ribonucleoside 5'-triphosphate + H2O = a ribonucleoside 5'-phosphate + diphosphate + H(+). The enzyme catalyses a 2'-deoxyribonucleoside 5'-triphosphate + H2O = a 2'-deoxyribonucleoside 5'-phosphate + diphosphate + H(+). Nucleoside triphosphate pyrophosphatase. May have a dual role in cell division arrest and in preventing the incorporation of modified nucleotides into cellular nucleic acids. The protein is Nucleoside triphosphate pyrophosphatase of Rickettsia felis (strain ATCC VR-1525 / URRWXCal2) (Rickettsia azadi).